Consider the following 320-residue polypeptide: Cytochrome f (320 aa).

An N-terminal signal peptide occupies residues 1-35; that stretch reads MQTRNAFSYIKEEITRSISVLLVIYIIIRAPISNA. Residues Tyr36, Cys56, Cys59, and His60 each coordinate heme. Residues 286–305 form a helical membrane-spanning segment; that stretch reads VQGLLFFLASIIFAQIFLVL.

It belongs to the cytochrome f family. In terms of assembly, the 4 large subunits of the cytochrome b6-f complex are cytochrome b6, subunit IV (17 kDa polypeptide, petD), cytochrome f and the Rieske protein, while the 4 small subunits are PetG, PetL, PetM and PetN. The complex functions as a dimer. Requires heme as cofactor.

Its subcellular location is the plastid. The protein localises to the chloroplast thylakoid membrane. Its function is as follows. Component of the cytochrome b6-f complex, which mediates electron transfer between photosystem II (PSII) and photosystem I (PSI), cyclic electron flow around PSI, and state transitions. In Lotus japonicus (Lotus corniculatus var. japonicus), this protein is Cytochrome f.